The chain runs to 337 residues: Protein SphX (337 aa).

The N-terminal stretch at 1 to 30 (MTTLKPALRRAAVLLPIAAVASSLFPIQEA) is a signal peptide.

It belongs to the PstS family. Post-translationally, the N-terminus is blocked.

It localises to the cell inner membrane. Functionally, may be involved in the system for phosphate transport across the cytoplasmic membrane. The sequence is that of Protein SphX (sphX) from Synechococcus elongatus (strain ATCC 33912 / PCC 7942 / FACHB-805) (Anacystis nidulans R2).